The sequence spans 136 residues: Protein PsiE (136 aa).

4 helical membrane-spanning segments follow: residues 15–35 (ILQTVLNLGLLCLGLILVVFL), 55–75 (YELVEGLVVYFLYFEFIALIV), 82–102 (FHFPLRYFVYIGITAIVRLII), and 108–128 (PLDVLIYSAAILLLVITLWLC).

Belongs to the PsiE family.

It localises to the cell inner membrane. The sequence is that of Protein PsiE from Escherichia coli (strain SE11).